A 322-amino-acid chain; its full sequence is Arginase-1 (322 aa).

Position 17 is an N6-succinyllysine (Lys17). Residues Ser62 and Ser72 each carry the phosphoserine modification. At Lys75 the chain carries N6-succinyllysine. Positions 101, 124, 126, and 128 each coordinate Mn(2+). Substrate contacts are provided by residues 126-130 and 137-139; these read HTDIN and SGN. At Ser163 the chain carries Phosphoserine. A substrate-binding site is contributed by Asp183. Ser217 is subject to Phosphoserine. Mn(2+)-binding residues include Asp232 and Asp234. Residues Thr246 and Glu277 each coordinate substrate.

Belongs to the arginase family. As to quaternary structure, homotrimer. Interacts with CMTM6. Requires Mn(2+) as cofactor. As to expression, within the immune system initially reported to be selectively expressed in granulocytes (polymorphonuclear leukocytes [PMNs]). Also detected in macrophages mycobacterial granulomas. Expressed in group2 innate lymphoid cells (ILC2s) during lung disease.

Its subcellular location is the cytoplasm. The protein resides in the cytoplasmic granule. The catalysed reaction is L-arginine + H2O = urea + L-ornithine. It functions in the pathway nitrogen metabolism; urea cycle; L-ornithine and urea from L-arginine: step 1/1. In terms of biological role, key element of the urea cycle converting L-arginine to urea and L-ornithine, which is further metabolized into metabolites proline and polyamides that drive collagen synthesis and bioenergetic pathways critical for cell proliferation, respectively; the urea cycle takes place primarily in the liver and, to a lesser extent, in the kidneys. Functions in L-arginine homeostasis in nonhepatic tissues characterized by the competition between nitric oxide synthase (NOS) and arginase for the available intracellular substrate arginine. Arginine metabolism is a critical regulator of innate and adaptive immune responses. Involved in an antimicrobial effector pathway in polymorphonuclear granulocytes (PMN). Upon PMN cell death is liberated from the phagolysosome and depletes arginine in the microenvironment leading to suppressed T cell and natural killer (NK) cell proliferation and cytokine secretion. In group 2 innate lymphoid cells (ILC2s) promotes acute type 2 inflammation in the lung and is involved in optimal ILC2 proliferation but not survival. In humans, the immunological role in the monocytic/macrophage/dendritic cell (DC) lineage is unsure. The polypeptide is Arginase-1 (ARG1) (Homo sapiens (Human)).